A 264-amino-acid chain; its full sequence is ATP synthase subunit a (264 aa).

Transmembrane regions (helical) follow at residues 41–61, 99–119, 129–149, 156–176, 194–214, 217–237, and 238–258; these read ITNIGFYLTMGAFFLLIINLL, IYFPFIYALFIFILINNLIGM, HFVLTFALSFTIVLGATILGF, FFSLLVPAGCPLGLLPLLVLI, ANILSGHMLLHILAGFTYNIM, GIIFFFLGLIPLAFIIAFSGL, and ELGIAFIQAQVFVVLTSGYIK.

The protein belongs to the ATPase A chain family. F-type ATPases have 2 components, CF(1) - the catalytic core - and CF(0) - the membrane proton channel. CF(1) has five subunits: alpha(3), beta(3), gamma(1), delta(1), epsilon(1). CF(0) has three main subunits: a, b and c.

The protein localises to the mitochondrion inner membrane. Mitochondrial membrane ATP synthase (F(1)F(0) ATP synthase or Complex V) produces ATP from ADP in the presence of a proton gradient across the membrane which is generated by electron transport complexes of the respiratory chain. F-type ATPases consist of two structural domains, F(1) - containing the extramembraneous catalytic core and F(0) - containing the membrane proton channel, linked together by a central stalk and a peripheral stalk. During catalysis, ATP synthesis in the catalytic domain of F(1) is coupled via a rotary mechanism of the central stalk subunits to proton translocation. Key component of the proton channel; it may play a direct role in the translocation of protons across the membrane. This chain is ATP synthase subunit a (ATP6), found in Podospora anserina (strain S / ATCC MYA-4624 / DSM 980 / FGSC 10383) (Pleurage anserina).